The following is a 426-amino-acid chain: Serine--tRNA ligase (426 aa).

Residue 231–233 (TAE) participates in L-serine binding. ATP-binding positions include 262-264 (RRE) and valine 278. Glutamate 285 is an L-serine binding site. 349-352 (EVSS) contributes to the ATP binding site. L-serine is bound at residue serine 384.

This sequence belongs to the class-II aminoacyl-tRNA synthetase family. Type-1 seryl-tRNA synthetase subfamily. In terms of assembly, homodimer. The tRNA molecule binds across the dimer.

It localises to the cytoplasm. The catalysed reaction is tRNA(Ser) + L-serine + ATP = L-seryl-tRNA(Ser) + AMP + diphosphate + H(+). It catalyses the reaction tRNA(Sec) + L-serine + ATP = L-seryl-tRNA(Sec) + AMP + diphosphate + H(+). The protein operates within aminoacyl-tRNA biosynthesis; selenocysteinyl-tRNA(Sec) biosynthesis; L-seryl-tRNA(Sec) from L-serine and tRNA(Sec): step 1/1. Catalyzes the attachment of serine to tRNA(Ser). Is also able to aminoacylate tRNA(Sec) with serine, to form the misacylated tRNA L-seryl-tRNA(Sec), which will be further converted into selenocysteinyl-tRNA(Sec). This Chlamydia felis (strain Fe/C-56) (Chlamydophila felis) protein is Serine--tRNA ligase.